The primary structure comprises 416 residues: Glutamyl-tRNA reductase (416 aa).

Substrate contacts are provided by residues 49 to 52 (TCNR), serine 105, 110 to 112 (EPQ), and glutamine 116. Cysteine 50 functions as the Nucleophile in the catalytic mechanism. 185-190 (GAGETI) contacts NADP(+).

This sequence belongs to the glutamyl-tRNA reductase family. As to quaternary structure, homodimer.

The enzyme catalyses (S)-4-amino-5-oxopentanoate + tRNA(Glu) + NADP(+) = L-glutamyl-tRNA(Glu) + NADPH + H(+). It functions in the pathway porphyrin-containing compound metabolism; protoporphyrin-IX biosynthesis; 5-aminolevulinate from L-glutamyl-tRNA(Glu): step 1/2. In terms of biological role, catalyzes the NADPH-dependent reduction of glutamyl-tRNA(Glu) to glutamate 1-semialdehyde (GSA). In Shewanella amazonensis (strain ATCC BAA-1098 / SB2B), this protein is Glutamyl-tRNA reductase.